Consider the following 252-residue polypeptide: Imidazole glycerol phosphate synthase subunit HisF (252 aa).

Residues aspartate 13 and aspartate 132 contribute to the active site.

The protein belongs to the HisA/HisF family. In terms of assembly, heterodimer of HisH and HisF.

The protein resides in the cytoplasm. The enzyme catalyses 5-[(5-phospho-1-deoxy-D-ribulos-1-ylimino)methylamino]-1-(5-phospho-beta-D-ribosyl)imidazole-4-carboxamide + L-glutamine = D-erythro-1-(imidazol-4-yl)glycerol 3-phosphate + 5-amino-1-(5-phospho-beta-D-ribosyl)imidazole-4-carboxamide + L-glutamate + H(+). It participates in amino-acid biosynthesis; L-histidine biosynthesis; L-histidine from 5-phospho-alpha-D-ribose 1-diphosphate: step 5/9. IGPS catalyzes the conversion of PRFAR and glutamine to IGP, AICAR and glutamate. The HisF subunit catalyzes the cyclization activity that produces IGP and AICAR from PRFAR using the ammonia provided by the HisH subunit. This Campylobacter hominis (strain ATCC BAA-381 / DSM 21671 / CCUG 45161 / LMG 19568 / NCTC 13146 / CH001A) protein is Imidazole glycerol phosphate synthase subunit HisF.